The chain runs to 252 residues: MLMKRVIPCLDVTAGRVVKGTNFVNLRDAGDPVELAAFYDKEGADELVFLDITASSDGRVTMLDVVRRTAEEVFIPFTVGGGIRTVDDMRLMLKAGADKIGINTAAIKNPRLISEGAIKFGSQCIVVAMDARQVASEKWEVYIHGGRTSTGLDAVEWALKAEELGAGEILLTSMDRDGTKEGFDLALTRTIAQHVKIPVIASGGVGNLEHMARGLTDGMADAALAASIFHFGEYTIRQAKEYLMEQGIPVRL.

Catalysis depends on residues Asp11 and Asp130.

Belongs to the HisA/HisF family. In terms of assembly, heterodimer of HisH and HisF.

The protein localises to the cytoplasm. It catalyses the reaction 5-[(5-phospho-1-deoxy-D-ribulos-1-ylimino)methylamino]-1-(5-phospho-beta-D-ribosyl)imidazole-4-carboxamide + L-glutamine = D-erythro-1-(imidazol-4-yl)glycerol 3-phosphate + 5-amino-1-(5-phospho-beta-D-ribosyl)imidazole-4-carboxamide + L-glutamate + H(+). The protein operates within amino-acid biosynthesis; L-histidine biosynthesis; L-histidine from 5-phospho-alpha-D-ribose 1-diphosphate: step 5/9. Its function is as follows. IGPS catalyzes the conversion of PRFAR and glutamine to IGP, AICAR and glutamate. The HisF subunit catalyzes the cyclization activity that produces IGP and AICAR from PRFAR using the ammonia provided by the HisH subunit. In Desulforamulus reducens (strain ATCC BAA-1160 / DSM 100696 / MI-1) (Desulfotomaculum reducens), this protein is Imidazole glycerol phosphate synthase subunit HisF.